The sequence spans 531 residues: Conglutin beta 1 (531 aa).

An N-terminal signal peptide occupies residues 1 to 30 (MGKMRVRFPTLVLVLGIVFLMAVSIGIAYG). Positions 31–108 (EKDVLKSHER…EQQQGSPSYS (78 aa)) are excised as a propeptide. Basic and acidic residues-rich tracts occupy residues 37–51 (SHER…EWQP) and 79–99 (SGYE…REQE). Disordered stretches follow at residues 37–124 (SHER…RFQT), 283–302 (QEYE…EGVI), and 314–337 (TKYA…LRSN). Residues 115 to 273 (YHFNSQRFQT…TFNTRYEEIQ (159 aa)) form the Cupin type-1 1 domain. Over residues 286 to 302 (EEQRRGQEQSHQDEGVI) the composition is skewed to basic and acidic residues. A compositionally biased stretch (polar residues) spans 316–337 (YAQSSSGKDKPSQSGPFNLRSN). The 163-residue stretch at 332–494 (FNLRSNEPIY…TFPGSAEDIE (163 aa)) folds into the Cupin type-1 2 domain. Asparagine 444 carries an N-linked (GlcNAc...) asparagine glycan. The interval 508–531 (ALPQQQQQSEKEGRRGRRGPISSI) is disordered.

The protein belongs to the 7S seed storage protein family.

Functionally, seed storage protein. Accumulates during seed development and is hydrolyzed after germination to provide a carbon and nitrogen source for the developing seedling. Has a lectin-like activity. The chain is Conglutin beta 1 from Lupinus albus (White lupine).